Here is a 285-residue protein sequence, read N- to C-terminus: Diaminopimelate epimerase (285 aa).

Residues N15 and N68 each coordinate substrate. The Proton donor role is filled by C77. Substrate contacts are provided by residues 78–79, N165, N201, and 219–220; these read GN and ER. The Proton acceptor role is filled by C228. Residue 229–230 coordinates substrate; sequence GT.

This sequence belongs to the diaminopimelate epimerase family. In terms of assembly, homodimer.

It is found in the cytoplasm. The enzyme catalyses (2S,6S)-2,6-diaminopimelate = meso-2,6-diaminopimelate. It participates in amino-acid biosynthesis; L-lysine biosynthesis via DAP pathway; DL-2,6-diaminopimelate from LL-2,6-diaminopimelate: step 1/1. In terms of biological role, catalyzes the stereoinversion of LL-2,6-diaminopimelate (L,L-DAP) to meso-diaminopimelate (meso-DAP), a precursor of L-lysine and an essential component of the bacterial peptidoglycan. The chain is Diaminopimelate epimerase from Synechococcus sp. (strain JA-3-3Ab) (Cyanobacteria bacterium Yellowstone A-Prime).